A 137-amino-acid polypeptide reads, in one-letter code: Ribosomal RNA large subunit methyltransferase H (137 aa).

S-adenosyl-L-methionine contacts are provided by residues Leu-56, Gly-85, and 104-109; that span reads LSPLTL.

This sequence belongs to the RNA methyltransferase RlmH family. As to quaternary structure, homodimer.

Its subcellular location is the cytoplasm. It carries out the reaction pseudouridine(1915) in 23S rRNA + S-adenosyl-L-methionine = N(3)-methylpseudouridine(1915) in 23S rRNA + S-adenosyl-L-homocysteine + H(+). Its function is as follows. Specifically methylates the pseudouridine at position 1915 (m3Psi1915) in 23S rRNA. The sequence is that of Ribosomal RNA large subunit methyltransferase H from Thermus thermophilus (strain ATCC 27634 / DSM 579 / HB8).